The following is a 370-amino-acid chain: Ganglioside-induced differentiation-associated protein 1-like 1 (370 aa).

One can recognise a GST N-terminal domain in the interval 45 to 129 (ESLVLYHWTQ…YVERTFTGEH (85 aa)). The GST C-terminal domain maps to 177–344 (PKYATAEIRR…RLVKRKPPSF (168 aa)).

It belongs to the GST superfamily.

This chain is Ganglioside-induced differentiation-associated protein 1-like 1 (Gdap1l1), found in Mus musculus (Mouse).